Consider the following 950-residue polypeptide: Valine--tRNA ligase (950 aa).

The 'HIGH' region signature appears at 40-50 (PNVTGSLHMGH). A 'KMSKS' region motif is present at residues 551-555 (KMSKS). An ATP-binding site is contributed by lysine 554. Positions 881-950 (LIDKSAELGR…AEQRQKIAAL (70 aa)) form a coiled coil.

It belongs to the class-I aminoacyl-tRNA synthetase family. ValS type 1 subfamily. As to quaternary structure, monomer.

The protein resides in the cytoplasm. It carries out the reaction tRNA(Val) + L-valine + ATP = L-valyl-tRNA(Val) + AMP + diphosphate. Functionally, catalyzes the attachment of valine to tRNA(Val). As ValRS can inadvertently accommodate and process structurally similar amino acids such as threonine, to avoid such errors, it has a 'posttransfer' editing activity that hydrolyzes mischarged Thr-tRNA(Val) in a tRNA-dependent manner. The chain is Valine--tRNA ligase from Pseudomonas aeruginosa (strain ATCC 15692 / DSM 22644 / CIP 104116 / JCM 14847 / LMG 12228 / 1C / PRS 101 / PAO1).